Here is a 903-residue protein sequence, read N- to C-terminus: MIKESSSPALDADKIEVPSPKDENNSSNSEAATDNEDFEISDDDDDDRNHKHRKREARPQSFDENTEQSPGGPLKKRHKISGGADSHGEAQKDFFPKFKRRPGAGAHSRAPRVNPSFRDSSASVAARAPMTRGRGRNGAPWAQHEPRFNTLEMIDFASQMASQGPPTHPSLFMGPALPSGGSAQNGSWGPYGFMPGMPNGMLDPIHPLGMQGPIQPAISPLIDLGMPRQRCRDFEERGFCLRGDMCPMEHGLNRIVVEDMQSLSQFNLPVTVPNTQGLGIQNEPGTAPVNTSSLGGSKGVPAKDIKSAVTNDVLKLNGTTALAVSDADVYDPDQPLWNNEHPDASAGFAHTDGVWNAESLGYEAAREQGNQVLAADSSQNSKSSVWGRIASKKLGHGKTANATSTSATGNKRNESYDEMAPSTVHVNPASAKDSNGQSNSRIFGDVGRQSNRASHKASRTLYVNGIPLESNRWEALLSHFQKFGQVIDIYIPSNSEKAFVQFSKREEAEAALKAPDAVMGNRFIKLWWANRDRIPDEVEGRIPAKSSHMSAALANSVPQPSSSNRGKENLQSATPRASSGSSAEASGPGTGHKMLPANSVKSLPPDTKRQESLELLEELRKKQEILAQKRDEFRRQLEKLAKQKGLANSAKQAEAGGKEVASNDVHRVTDSKSMNTGTEGPRDAAGTLQNRTSGELASSSHKSSATSAQKPAVATKQTSPLLVPSQNRFKLDNRTTSFRILPPLPPEIADESVLKDHFMSFGELSSVVLEDTEAYNHDATLKPSLSCSACVTYTTRQSAEKAFIGGKSCKGHTLRFMWLTASPGSTNHSRFQKTSIPARASSFSSQTQNMPSESSTTVGKMSSTVKSSTTAKPHSESMPTATSAKTSVEIPKALSSRDSDVSQ.

The interval 1–144 is disordered; sequence MIKESSSPAL…GRNGAPWAQH (144 aa). Basic and acidic residues predominate over residues 11 to 24; the sequence is DADKIEVPSPKDEN. Over residues 33 to 46 the composition is skewed to acidic residues; it reads TDNEDFEISDDDDD. The span at 86–96 shows a compositional bias: basic and acidic residues; that stretch reads SHGEAQKDFFP. A C3H1-type zinc finger spans residues 225–253; the sequence is GMPRQRCRDFEERGFCLRGDMCPMEHGLN. The disordered stretch occupies residues 390–456; sequence ASKKLGHGKT…GRQSNRASHK (67 aa). Residues 397–410 are compositionally biased toward low complexity; that stretch reads GKTANATSTSATGN. The span at 432-441 shows a compositional bias: polar residues; that stretch reads KDSNGQSNSR. In terms of domain architecture, RRM spans 459 to 531; that stretch reads RTLYVNGIPL…RFIKLWWANR (73 aa). 3 disordered regions span residues 545–609, 642–720, and 826–903; these read KSSH…DTKR, KQKG…QTSP, and TNHS…DVSQ. Polar residues predominate over residues 556-576; sequence SVPQPSSSNRGKENLQSATPR. Over residues 577 to 587 the composition is skewed to low complexity; that stretch reads ASSGSSAEASG. A coiled-coil region spans residues 608–649; that stretch reads KRQESLELLEELRKKQEILAQKRDEFRRQLEKLAKQKGLANS. Residues 693 to 708 show a composition bias toward low complexity; the sequence is SGELASSSHKSSATSA. The span at 826–886 shows a compositional bias: polar residues; the sequence is TNHSRFQKTS…SMPTATSAKT (61 aa).

The sequence is that of Zinc finger CCCH domain-containing protein 27 from Oryza sativa subsp. japonica (Rice).